Here is a 567-residue protein sequence, read N- to C-terminus: CTD small phosphatase-like protein 2 (567 aa).

3 disordered regions span residues 31–53 (QQQQHQHEDTDSPKKKKLRHQCE), 100–150 (ASST…FSSV), and 280–361 (NKEN…EEFN). Low complexity-rich tracts occupy residues 100-118 (ASSTSSISPSSSQSSSPLK), 130-150 (SMNDSTSSSSSSNNNNNFSSV), and 286-297 (ESNNSNSNSNSS). A compositionally biased stretch (polar residues) spans 298–308 (PSFFHNLQQHP). Residues 309–332 (TSAATTTTTTTTTITTTSATTSII) are compositionally biased toward low complexity. Residues 337–360 (NSDDEIDDECDDESEEEEEDEEEF) show a composition bias toward acidic residues. The FCP1 homology domain maps to 386–544 (HSSPKISLVL…LQLVPFLESL (159 aa)).

This sequence belongs to the CTDSPL2 family.

Its function is as follows. Probable phosphatase. This is CTD small phosphatase-like protein 2 (ctdspl2) from Dictyostelium discoideum (Social amoeba).